We begin with the raw amino-acid sequence, 120 residues long: Large ribosomal subunit protein bL19 (120 aa).

The protein belongs to the bacterial ribosomal protein bL19 family.

In terms of biological role, this protein is located at the 30S-50S ribosomal subunit interface and may play a role in the structure and function of the aminoacyl-tRNA binding site. This is Large ribosomal subunit protein bL19 from Nostoc punctiforme (strain ATCC 29133 / PCC 73102).